An 85-amino-acid polypeptide reads, in one-letter code: Small ribosomal subunit protein uS17 (85 aa).

This sequence belongs to the universal ribosomal protein uS17 family. As to quaternary structure, part of the 30S ribosomal subunit.

One of the primary rRNA binding proteins, it binds specifically to the 5'-end of 16S ribosomal RNA. The protein is Small ribosomal subunit protein uS17 of Geobacter metallireducens (strain ATCC 53774 / DSM 7210 / GS-15).